A 931-amino-acid chain; its full sequence is MAAPPARPDHTRLLHICLLLGVLVEIRAEQIRYSVFEEQEEGSVVGNIAKDLGLAPRELAERGVRIVSRGRTQLFALNPRSGTLVTAGRIDREELCDRSPNCVTNLEILLEDTVKILRVEVEIIDVNDNPPSFGTEQREIKVAENENPGTRFPLPEAFDPDVGVNSLQGYQLNSNGYFSLDVQSGADGIKYPELVLERALDREEEAVHHLVLTAFDGGDPVRSGTARILIILVDTNDNAPVFTQPEYHVSVHENVPVGTLLLTVKATDPDEGANGDVTYSFRKVRDKISQLFQLNSLSGDITILGDLDYEDSGFYDIDVEAHDGPGLRARSKVLVTVLDENDNAPEVTVTSLTSSVQETSSPGTVIALFNVHDSDSGGNGLVTCSIPDNLPFTLEKTYGNYYRLLTHRTLDREEVSEYNITVTATDQGTPPLSTETHISLQVMDINDNPPTFPHASYSAYVPENNPRGASILSMTAQDPDSGDNARITYSLAEDTFQGAPLSSYVSINSNTGILYALRSFDYEQFRDLQLLVTASDSGDPPLSSNVSLSLFVLDQNDNVPEILYPTFPTDDSTGVELAPRSADSGYLVTKVVAVDRDSGQNAWLSYRLLKSSEPGLFAVGLHTGEVRTARALLDRDALKQSLVVVVQDHGQPPLSATVTLTVAVADSIPDVLADLGSLKPSADPDDSGLTLYLVVSVAAVSCVFLAFVTVLLALKLRRWHKSRLLHAEGSRLSGVPASHFVGVDGVRAFLQTYSHEVSLTADSRKSHLIFSQPSYADTLISLESCEKSEPLLITQDLLETKGDPNLQQAPPNTDWRFSQAQRPGTSGSQNGDDTGTWPNNQFDTEMLQAMILASASEAADGSSTLGGGAGTMGLSARYGPQFTLQHVPDYRQNVYIPGSNATLTNAAGKRDGKAPAGGNGNKKKSGKKEKK.

Residues Met1 to Ala28 form the signal peptide. 6 Cadherin domains span residues Glu29 to Phe133, Gly134 to Phe242, Thr243 to Val347, Thr348 to Phe452, Pro453 to Phe567, and Asp570 to Ala682. Residues Glu29–Tyr692 lie on the Extracellular side of the membrane. 2 N-linked (GlcNAc...) asparagine glycosylation sites follow: Asn419 and Asn545. A helical transmembrane segment spans residues Leu693–Ala713. Topologically, residues Leu714–Lys931 are cytoplasmic. Disordered regions lie at residues Lys801 to Asn840 and Ala901 to Lys931. Polar residues predominate over residues Asn805–Asn840. Residues Asn921–Lys931 are compositionally biased toward basic residues.

The protein localises to the cell membrane. In terms of biological role, potential calcium-dependent cell-adhesion protein. May be involved in the establishment and maintenance of specific neuronal connections in the brain. This Pan troglodytes (Chimpanzee) protein is Protocadherin gamma-A4 (PCDHGA4).